We begin with the raw amino-acid sequence, 110 residues long: Mobility group protein 1B (110 aa).

A DNA-binding region (HMG box) is located at residues 5–71 (PKRPLSAYML…NYIRALQEYE (67 aa)). Positions 71-81 (ERNGGGGDDKG) are enriched in basic and acidic residues. Residues 71-110 (ERNGGGGDDKGKKRKGAAPKKGAGKKSKKGAHSDDDGDSE) form a disordered region. Basic residues predominate over residues 82-100 (KKRKGAAPKKGAGKKSKKG).

The protein belongs to the HMGB family.

The protein localises to the nucleus. Its subcellular location is the chromosome. In terms of biological role, found in condensed chromomeres. Binds preferentially to AT-rich DNA. The sequence is that of Mobility group protein 1B (HMG1B) from Chironomus tentans (Midge).